A 134-amino-acid chain; its full sequence is D-ribose pyranase (134 aa).

Histidine 20 acts as the Proton donor in catalysis. Residues aspartate 28, histidine 101, and 123–125 (YSN) each bind substrate.

Belongs to the RbsD / FucU family. RbsD subfamily. Homodecamer.

It is found in the cytoplasm. The enzyme catalyses beta-D-ribopyranose = beta-D-ribofuranose. It participates in carbohydrate metabolism; D-ribose degradation; D-ribose 5-phosphate from beta-D-ribopyranose: step 1/2. In terms of biological role, catalyzes the interconversion of beta-pyran and beta-furan forms of D-ribose. The sequence is that of D-ribose pyranase from Pseudomonas syringae pv. tomato (strain ATCC BAA-871 / DC3000).